The chain runs to 694 residues: Potassium-transporting ATPase ATP-binding subunit (694 aa).

4 consecutive transmembrane segments (helical) span residues 36-56 (VMFV…RDLI), 62-82 (LAFS…ANFA), 218-238 (IALN…TATI), and 249-269 (IPII…IGAL). Residue D306 is the 4-aspartylphosphate intermediate of the active site. Residues D343, E347, 376–383 (FTAQTRMS), and K394 contribute to the ATP site. Residues D530 and D534 each coordinate Mg(2+). 3 helical membrane-spanning segments follow: residues 600 to 620 (FAII…LNVM), 628 to 648 (AILS…PLSL), and 666 to 686 (LVIY…LIDL).

This sequence belongs to the cation transport ATPase (P-type) (TC 3.A.3) family. Type IA subfamily. The system is composed of three essential subunits: KdpA, KdpB and KdpC.

It localises to the cell inner membrane. The catalysed reaction is K(+)(out) + ATP + H2O = K(+)(in) + ADP + phosphate + H(+). Its function is as follows. Part of the high-affinity ATP-driven potassium transport (or Kdp) system, which catalyzes the hydrolysis of ATP coupled with the electrogenic transport of potassium into the cytoplasm. This subunit is responsible for energy coupling to the transport system and for the release of the potassium ions to the cytoplasm. The polypeptide is Potassium-transporting ATPase ATP-binding subunit (Agrobacterium fabrum (strain C58 / ATCC 33970) (Agrobacterium tumefaciens (strain C58))).